Consider the following 198-residue polypeptide: Probable GTP-binding protein EngB (198 aa).

In terms of domain architecture, EngB-type G spans 22 to 195 (NIPEVALAGR…LEVIGRWVGL (174 aa)). GTP is bound by residues 30-37 (GRSNVGKS), 57-61 (GRTRL), 75-78 (DLPG), 142-145 (TKAD), and 174-176 (FSA). Residues Ser-37 and Thr-59 each coordinate Mg(2+).

This sequence belongs to the TRAFAC class TrmE-Era-EngA-EngB-Septin-like GTPase superfamily. EngB GTPase family. Mg(2+) is required as a cofactor.

Functionally, necessary for normal cell division and for the maintenance of normal septation. This is Probable GTP-binding protein EngB from Pelotomaculum thermopropionicum (strain DSM 13744 / JCM 10971 / SI).